The primary structure comprises 389 residues: Succinate--CoA ligase [ADP-forming] subunit beta (389 aa).

An ATP-grasp domain is found at 9-244; the sequence is KQLFADYGLP…PSQEDERERR (236 aa). Residues Lys-46, 53–55, Glu-99, Thr-102, and Glu-107 contribute to the ATP site; that span reads GRG. Asn-199 and Asp-213 together coordinate Mg(2+). Substrate is bound by residues Asn-264 and 321-323; that span reads GIV.

It belongs to the succinate/malate CoA ligase beta subunit family. In terms of assembly, heterotetramer of two alpha and two beta subunits. The cofactor is Mg(2+).

The enzyme catalyses succinate + ATP + CoA = succinyl-CoA + ADP + phosphate. It catalyses the reaction GTP + succinate + CoA = succinyl-CoA + GDP + phosphate. It functions in the pathway carbohydrate metabolism; tricarboxylic acid cycle; succinate from succinyl-CoA (ligase route): step 1/1. In terms of biological role, succinyl-CoA synthetase functions in the citric acid cycle (TCA), coupling the hydrolysis of succinyl-CoA to the synthesis of either ATP or GTP and thus represents the only step of substrate-level phosphorylation in the TCA. The beta subunit provides nucleotide specificity of the enzyme and binds the substrate succinate, while the binding sites for coenzyme A and phosphate are found in the alpha subunit. In Alcanivorax borkumensis (strain ATCC 700651 / DSM 11573 / NCIMB 13689 / SK2), this protein is Succinate--CoA ligase [ADP-forming] subunit beta.